The chain runs to 37 residues: Large ribosomal subunit protein bL36c (37 aa).

The protein belongs to the bacterial ribosomal protein bL36 family.

The protein resides in the plastid. Its subcellular location is the chloroplast. In Gnetum parvifolium (Small-leaved jointfir), this protein is Large ribosomal subunit protein bL36c.